We begin with the raw amino-acid sequence, 476 residues long: Bridging integrator 2 (476 aa).

Residues 26–242 form the BAR domain; the sequence is VLQKLGKTVE…MGKLDKQHSS (217 aa). Disordered regions lie at residues 269–369 and 395–476; these read YPCP…TEGA and GAAP…LTPL. A compositionally biased stretch (polar residues) spans 279–292; it reads EPSSGAEQTPTSPR. The segment covering 310-324 has biased composition (pro residues); that stretch reads PAEPGAPMPGPPPAS. Positions 325 to 339 are enriched in low complexity; it reads PTSVRSASESESECS. Residues 340 to 353 are compositionally biased toward basic and acidic residues; sequence GESREIDLSPKEME. The segment covering 461 to 476 has biased composition (polar residues); it reads VSCNPPQDPSESLTPL.

The protein localises to the cytoplasm. In Gallus gallus (Chicken), this protein is Bridging integrator 2 (BIN2).